Consider the following 282-residue polypeptide: MSSYANHQALAGLTLGKSTDYRDTYDASLLQGVPRSLNRDPLGLKADNLPFHGTDIWTLYELSWLNAKGLPQVAVGHVELDYTSVNLIESKSFKLYLNSFNQTRFNNWDEVRQTLERDLSTCAQGKISVALYRLDELEGQPIGHFNGTCIDDQDITIDNYEFTTDYLENATCGEKVVEETLVSHLLKSNCLITHQPDWGSLQIQYRGRQIDREKLLRYLVSFRHHNEFHEQCVERIFNDLLRFCQPEKLSVYARYTRRGGLDINPWRSNSDFVPSTTRLVRQ.

88–90 lines the substrate pocket; it reads IES. 90–91 is a binding site for NADPH; the sequence is SK. Cys190 (thioimide intermediate) is an active-site residue. Asp197 (proton donor) is an active-site residue. 229–230 provides a ligand contact to substrate; it reads HE. NADPH is bound at residue 258-259; that stretch reads RG.

It belongs to the GTP cyclohydrolase I family. QueF type 2 subfamily. As to quaternary structure, homodimer.

Its subcellular location is the cytoplasm. The catalysed reaction is 7-aminomethyl-7-carbaguanine + 2 NADP(+) = 7-cyano-7-deazaguanine + 2 NADPH + 3 H(+). The protein operates within tRNA modification; tRNA-queuosine biosynthesis. Its function is as follows. Catalyzes the NADPH-dependent reduction of 7-cyano-7-deazaguanine (preQ0) to 7-aminomethyl-7-deazaguanine (preQ1). The protein is NADPH-dependent 7-cyano-7-deazaguanine reductase of Escherichia coli (strain K12 / MC4100 / BW2952).